The chain runs to 223 residues: Deoxyribose-phosphate aldolase (223 aa).

D92 functions as the Proton donor/acceptor in the catalytic mechanism. K158 (schiff-base intermediate with acetaldehyde) is an active-site residue. The active-site Proton donor/acceptor is the K188.

Belongs to the DeoC/FbaB aldolase family. DeoC type 1 subfamily.

Its subcellular location is the cytoplasm. It catalyses the reaction 2-deoxy-D-ribose 5-phosphate = D-glyceraldehyde 3-phosphate + acetaldehyde. It participates in carbohydrate degradation; 2-deoxy-D-ribose 1-phosphate degradation; D-glyceraldehyde 3-phosphate and acetaldehyde from 2-deoxy-alpha-D-ribose 1-phosphate: step 2/2. Catalyzes a reversible aldol reaction between acetaldehyde and D-glyceraldehyde 3-phosphate to generate 2-deoxy-D-ribose 5-phosphate. This chain is Deoxyribose-phosphate aldolase, found in Mycobacterium avium (strain 104).